The sequence spans 415 residues: Squalene synthase clz20 (415 aa).

Asn-114 carries an N-linked (GlcNAc...) asparagine glycan. Residues 395 to 415 (ADTMYLAVLVLGVFGVVAAIL) form a helical membrane-spanning segment.

The protein belongs to the phytoene/squalene synthase family. Mg(2+) serves as cofactor.

Its subcellular location is the membrane. It carries out the reaction 2 (2E,6E)-farnesyl diphosphate + NADH + H(+) = squalene + 2 diphosphate + NAD(+). It catalyses the reaction 2 (2E,6E)-farnesyl diphosphate + NADPH + H(+) = squalene + 2 diphosphate + NADP(+). It functions in the pathway terpene metabolism; lanosterol biosynthesis; lanosterol from farnesyl diphosphate: step 1/3. Its function is as follows. Squalene synthase; part of the gene cluster that mediates the biosynthesis of squalestatin S1 (SQS1, also known as zaragozic acid A), a heavily oxidized fungal polyketide that offers potent cholesterol lowering activity by targeting squalene synthase (SS). Catalyzes the condensation of 2 two farnesyl pyrophosphate moieties to form squalene. The presence of a gene encoding a squalene synthase supports the identification of the cluster as being responsible for SQS1 production and suggests a likely mechanism for self-resistance. The chain is Squalene synthase clz20 from Cochliobolus lunatus (Filamentous fungus).